Consider the following 169-residue polypeptide: Cell division inhibitor SulA (169 aa).

A ftsZ binding region spans residues 106 to 112 (ALRTGNY). A lon protease binding region spans residues 162–169 (KIHSNLYH).

The protein belongs to the SulA family. In terms of assembly, interacts with FtsZ. Post-translationally, is rapidly cleaved and degraded by the Lon protease once DNA damage is repaired.

Functionally, component of the SOS system and an inhibitor of cell division. Accumulation of SulA causes rapid cessation of cell division and the appearance of long, non-septate filaments. In the presence of GTP, binds a polymerization-competent form of FtsZ in a 1:1 ratio, thus inhibiting FtsZ polymerization and therefore preventing it from participating in the assembly of the Z ring. This mechanism prevents the premature segregation of damaged DNA to daughter cells during cell division. In Salmonella gallinarum (strain 287/91 / NCTC 13346), this protein is Cell division inhibitor SulA.